Consider the following 114-residue polypeptide: MNVLLGGFVIFATFVTLCNASCSFIPNERFPGDSTRECTDLKGNKHPINSKWKTDNCERCTCYKTEIICCTLIATPVGYDKKKCQRIFKKEDCKYIVVEKKNPKKTCPIDQWIL.

A signal peptide spans 1-20 (MNVLLGGFVIFATFVTLCNA). Cystine bridges form between Cys-22–Cys-70, Cys-38–Cys-62, Cys-57–Cys-93, Cys-60–Cys-69, and Cys-84–Cys-107.

It belongs to the beta-microseminoprotein family. Homodimer; Interacts with PI16.

The protein resides in the secreted. This is Beta-microseminoprotein (MSMB) from Macaca mulatta (Rhesus macaque).